The following is a 259-amino-acid chain: Small ribosomal subunit protein mS23 (259 aa).

The protein belongs to the mitochondrion-specific ribosomal protein mS23 family. As to quaternary structure, component of the mitochondrial small ribosomal subunit.

It localises to the mitochondrion. This Pyricularia oryzae (strain 70-15 / ATCC MYA-4617 / FGSC 8958) (Rice blast fungus) protein is Small ribosomal subunit protein mS23 (RSM25).